Consider the following 289-residue polypeptide: LysM and putative peptidoglycan-binding domain-containing protein 4 (289 aa).

Residues 1–23 (MRLREGPTHSFQPPSSVHSSLGS) form a disordered region. Topologically, residues 1–208 (MRLREGPTHS…PASGADWGIR (208 aa)) are extracellular. Residues 9-23 (HSFQPPSSVHSSLGS) are compositionally biased toward polar residues. Residues Asn-30 and Asn-59 are each glycosylated (N-linked (GlcNAc...) asparagine). The 45-residue stretch at 71-115 (LERAITEDDNLNKLALQYGCKVSDIKRVNNLITDQDIYALKTIKI) folds into the LysM domain. 2 N-linked (GlcNAc...) asparagine glycosylation sites follow: Asn-134 and Asn-178. Residues 209 to 229 (WWNAVFIMLLVGIVLPVFYIV) traverse the membrane as a helical segment. Topologically, residues 230-289 (YFKTQGDSEGTFSIEGRTNVSTSLSPHTNTGHSMEQMTQRTSGFSPGLLQDTHKLLNPGG) are cytoplasmic. The interval 252–272 (SLSPHTNTGHSMEQMTQRTSG) is disordered.

The protein localises to the membrane. This is LysM and putative peptidoglycan-binding domain-containing protein 4 (lysmd4) from Xenopus laevis (African clawed frog).